The following is a 345-amino-acid chain: Metal-dependent phosphohydrolase cns2 (345 aa).

One can recognise an HD domain in the interval 70 to 171 (RLEHSVGAFI…QLCADRLDYA (102 aa)).

Interacts with cns1.

It localises to the lipid droplet. Its pathway is secondary metabolite biosynthesis. Metal-dependent phosphohydrolase; part of the gene cluster that mediates the biosynthesis of cordycepin (COR) and pentostatin (PTN), two adenosine analogs with related bioactivity profiles as both mimic adenosine and can inhibit some of the processes that are adenosine dependent. Within the pathway, cns2 catalyzes dephosphorylation of 3'-AMP to produce 2'-carbonyl-3'-deoxyadenosine (2'-C-3'-dA). The first step of cordycepin biosynthesis involves hydroxyl phosphorylation of the 3'-OH position on adenosine to produce adenosine-3'-monophosphate (3'-AMP), catalyzed by kinase activity of cns3. Next, 3'-AMP is dephosphorylated to 2'-carbonyl-3'-deoxyadenosine by cns2, which is finally converted to cordycepin (3'-deoxyadenosine) by the oxidoreductase cns1. This is Metal-dependent phosphohydrolase cns2 from Cordyceps militaris (strain CM01) (Caterpillar fungus).